The chain runs to 594 residues: Aspartate--tRNA(Asp/Asn) ligase (594 aa).

Residue Glu-175 participates in L-aspartate binding. The tract at residues 199–202 (QQLK) is aspartate. Arg-221 contacts L-aspartate. ATP contacts are provided by residues 221–223 (RDE) and Gln-230. His-450 contributes to the L-aspartate binding site. Glu-485 contacts ATP. Residue Arg-492 coordinates L-aspartate. 537–540 (GIDR) lines the ATP pocket.

Belongs to the class-II aminoacyl-tRNA synthetase family. Type 1 subfamily. Homodimer.

The protein resides in the cytoplasm. It catalyses the reaction tRNA(Asx) + L-aspartate + ATP = L-aspartyl-tRNA(Asx) + AMP + diphosphate. Functionally, aspartyl-tRNA synthetase with relaxed tRNA specificity since it is able to aspartylate not only its cognate tRNA(Asp) but also tRNA(Asn). Reaction proceeds in two steps: L-aspartate is first activated by ATP to form Asp-AMP and then transferred to the acceptor end of tRNA(Asp/Asn). This chain is Aspartate--tRNA(Asp/Asn) ligase, found in Herpetosiphon aurantiacus (strain ATCC 23779 / DSM 785 / 114-95).